Consider the following 199-residue polypeptide: Probable GTP-binding protein EngB (199 aa).

The EngB-type G domain maps to 21-195 (IYTEIAFLGR…EQKIILESLG (175 aa)). Residues 29–36 (GRSNVGKS), 56–60 (GKTQL), 81–84 (DLPG), 151–154 (TKAD), and 174–176 (VSN) each bind GTP. Positions 36 and 58 each coordinate Mg(2+).

It belongs to the TRAFAC class TrmE-Era-EngA-EngB-Septin-like GTPase superfamily. EngB GTPase family. Requires Mg(2+) as cofactor.

Its function is as follows. Necessary for normal cell division and for the maintenance of normal septation. This Campylobacter lari (strain RM2100 / D67 / ATCC BAA-1060) protein is Probable GTP-binding protein EngB.